The primary structure comprises 120 residues: Ribosome-binding factor A (120 aa).

The protein belongs to the RbfA family. In terms of assembly, monomer. Binds 30S ribosomal subunits, but not 50S ribosomal subunits or 70S ribosomes.

Its subcellular location is the cytoplasm. One of several proteins that assist in the late maturation steps of the functional core of the 30S ribosomal subunit. Associates with free 30S ribosomal subunits (but not with 30S subunits that are part of 70S ribosomes or polysomes). Required for efficient processing of 16S rRNA. May interact with the 5'-terminal helix region of 16S rRNA. This chain is Ribosome-binding factor A, found in Chlamydia felis (strain Fe/C-56) (Chlamydophila felis).